Here is a 208-residue protein sequence, read N- to C-terminus: Probable GTP-binding protein EngB (208 aa).

The region spanning 18–187 is the EngB-type G domain; that stretch reads KQFEICVIGR…FALMKKVVIQ (170 aa). GTP is bound by residues 26–33, 52–56, 69–72, 135–138, and 166–168; these read GRSNVGKS, GRTQL, DLPG, NKLD, and VSA. Mg(2+)-binding residues include Ser-33 and Thr-54.

The protein belongs to the TRAFAC class TrmE-Era-EngA-EngB-Septin-like GTPase superfamily. EngB GTPase family. Mg(2+) serves as cofactor.

Necessary for normal cell division and for the maintenance of normal septation. This chain is Probable GTP-binding protein EngB, found in Ureaplasma parvum serovar 3 (strain ATCC 27815 / 27 / NCTC 11736).